Here is a 689-residue protein sequence, read N- to C-terminus: Glycine--tRNA ligase beta subunit (689 aa).

The protein belongs to the class-II aminoacyl-tRNA synthetase family. In terms of assembly, tetramer of two alpha and two beta subunits.

The protein resides in the cytoplasm. It catalyses the reaction tRNA(Gly) + glycine + ATP = glycyl-tRNA(Gly) + AMP + diphosphate. The sequence is that of Glycine--tRNA ligase beta subunit from Dictyoglomus thermophilum (strain ATCC 35947 / DSM 3960 / H-6-12).